Consider the following 267-residue polypeptide: MAPRLRRNVSMLDPQHRAHAAAADPTPGAGGGVAVRVRGLRRVFGEQVVLDGLDLTITPGEFVALLGRSGSGKSTLIRILGGFDDGVEGEVLAARRRSVVFQEARLLPWKRVLPNVTLGLAGRDVAERGRVALAEVGLAGRERSWPATLSGGEAQRVALARALVREPDLLMLDEPFGALDALTRIRMHALLQHLCRRHQPAVLFVTHDVDEAILLADRVVVLTEGRFSLDVPVAVASPRRRADPAFDRLRATLLAELGVDDLAAATH.

In terms of domain architecture, ABC transporter spans 35-249; that stretch reads VRVRGLRRVF…RRADPAFDRL (215 aa). Position 67-74 (67-74) interacts with ATP; the sequence is GRSGSGKS.

This sequence belongs to the ABC transporter superfamily. Aliphatic sulfonates importer (TC 3.A.1.17.2) family. The complex is composed of two ATP-binding proteins (SsuB), two transmembrane proteins (SsuC) and a solute-binding protein (SsuA).

The protein localises to the cell membrane. It catalyses the reaction ATP + H2O + aliphatic sulfonate-[sulfonate-binding protein]Side 1 = ADP + phosphate + aliphatic sulfonateSide 2 + [sulfonate-binding protein]Side 1.. Functionally, part of the ABC transporter complex SsuABC involved in aliphatic sulfonates import. Responsible for energy coupling to the transport system. The polypeptide is Aliphatic sulfonates import ATP-binding protein SsuB 1 (Frankia alni (strain DSM 45986 / CECT 9034 / ACN14a)).